An 829-amino-acid chain; its full sequence is Coenzyme PQQ synthesis protein F (829 aa).

His-62 contributes to the Zn(2+) binding site. The active-site Proton acceptor is the Glu-65. Residues His-66 and Glu-143 each coordinate Zn(2+).

This sequence belongs to the peptidase M16 family. It depends on Zn(2+) as a cofactor.

The protein operates within cofactor biosynthesis; pyrroloquinoline quinone biosynthesis. In terms of biological role, required for coenzyme pyrroloquinoline quinone (PQQ) biosynthesis. It is thought that this protein is a protease that cleaves peptides bond in a small peptide (gene pqqA), providing the glutamate and tyrosine residues which are necessary for the synthesis of PQQ. This Pseudomonas protegens (strain DSM 19095 / LMG 27888 / CFBP 6595 / CHA0) protein is Coenzyme PQQ synthesis protein F (pqqF).